The primary structure comprises 222 residues: DnaJ homolog subfamily B member 9 (222 aa).

The signal sequence occupies residues 1–23 (MATPQSVFVFAICILMITELILA). Residues 26–90 (SYYDILGVPK…NSRKEYDTIG (65 aa)) form the J domain. The tract at residues 91 to 222 (HSAFTNGKGQ…VTTYTDCSGQ (132 aa)) is divergent targeting domain. Position 133 is a phosphoserine (Ser-133).

In terms of assembly, interacts with HSPA5/BiP; interaction is direct. Interacts with ERN1/IRE1 (via the luminal region). Interacts with DERL1. Post-translationally, not N-glycosylated.

The protein resides in the endoplasmic reticulum lumen. Co-chaperone for Hsp70 protein HSPA5/BiP that acts as a key repressor of the ERN1/IRE1-mediated unfolded protein response (UPR). J domain-containing co-chaperones stimulate the ATPase activity of Hsp70 proteins and are required for efficient substrate recognition by Hsp70 proteins. In the unstressed endoplasmic reticulum, interacts with the luminal region of ERN1/IRE1 and selectively recruits HSPA5/BiP: HSPA5/BiP disrupts the dimerization of the active ERN1/IRE1 luminal region, thereby inactivating ERN1/IRE1. Also involved in endoplasmic reticulum-associated degradation (ERAD) of misfolded proteins. Required for survival of B-cell progenitors and normal antibody production. In Mus musculus (Mouse), this protein is DnaJ homolog subfamily B member 9.